Here is a 177-residue protein sequence, read N- to C-terminus: Adenine phosphoribosyltransferase (177 aa).

Belongs to the purine/pyrimidine phosphoribosyltransferase family. In terms of assembly, homodimer.

The protein localises to the cytoplasm. The catalysed reaction is AMP + diphosphate = 5-phospho-alpha-D-ribose 1-diphosphate + adenine. It functions in the pathway purine metabolism; AMP biosynthesis via salvage pathway; AMP from adenine: step 1/1. Its function is as follows. Catalyzes a salvage reaction resulting in the formation of AMP, that is energically less costly than de novo synthesis. The protein is Adenine phosphoribosyltransferase of Synechococcus sp. (strain RCC307).